A 231-amino-acid polypeptide reads, in one-letter code: LexA repressor (231 aa).

The segment at residues 26–46 (FDEMKLALDLRSKSGIHRLIT) is a DNA-binding region (H-T-H motif). Residues 79–98 (VGFQPRVIDGDRPDRPRPAN) form a disordered region. Residues 86–95 (IDGDRPDRPR) are compositionally biased toward basic and acidic residues. Catalysis depends on for autocatalytic cleavage activity residues S152 and K190.

This sequence belongs to the peptidase S24 family. As to quaternary structure, homodimer.

The enzyme catalyses Hydrolysis of Ala-|-Gly bond in repressor LexA.. In terms of biological role, represses a number of genes involved in the response to DNA damage (SOS response), including recA and lexA. In the presence of single-stranded DNA, RecA interacts with LexA causing an autocatalytic cleavage which disrupts the DNA-binding part of LexA, leading to derepression of the SOS regulon and eventually DNA repair. In Ruegeria pomeroyi (strain ATCC 700808 / DSM 15171 / DSS-3) (Silicibacter pomeroyi), this protein is LexA repressor.